Reading from the N-terminus, the 575-residue chain is Major outer membrane protein MspA (575 aa).

Positions Met-1 to Ala-19 are cleaved as a signal peptide.

It is found in the cell outer membrane. Major component of the outer membrane sheath. This is Major outer membrane protein MspA (mspA) from Treponema maltophilum.